The primary structure comprises 1979 residues: E3 ubiquitin-protein ligase TTC3 (1979 aa).

Residues 1–230 (MDDFAEGGLS…RHSCMQCVKQ (230 aa)) form an interaction with POLG region. 2 TPR repeats span residues 231 to 264 (GELM…RPEN) and 266 to 298 (LLYG…KNTW). At serine 378 the chain carries Phosphoserine. Residues 422–457 (CDCHPEFLPPPSQPPRHKGKQKSRNNESEKPSFNSE) form a disordered region. TPR repeat units follow at residues 536 to 572 (VLVV…YPNE) and 576 to 609 (CLAY…ISRL). Positions 783–811 (LAQERMEEDLRESNPPKNEEPEETSDSAQ) are disordered. Position 1009 is a phosphoserine (serine 1009). 7 disordered regions span residues 1021 to 1067 (NKGK…GPFA), 1214 to 1289 (QPDV…EEAK), 1402 to 1427 (QGSA…SSDS), 1574 to 1601 (KNDG…DEKT), 1757 to 1776 (MDSA…GSPT), 1788 to 1821 (KGAS…KKPS), and 1873 to 1927 (DEQK…PAPD). The segment covering 1036–1050 (VGSGAASVAPSSEAV) has biased composition (low complexity). At serine 1060 the chain carries Phosphoserine. The segment covering 1214-1227 (QPDVKSEALSEDVK) has biased composition (basic and acidic residues). The segment covering 1248–1257 (DSDSSSGSAS) has biased composition (low complexity). The segment covering 1576-1586 (DGFDKECEPHP) has biased composition (basic and acidic residues). Polar residues-rich tracts occupy residues 1788 to 1799 (KGASQVSPSEQS) and 1808 to 1821 (GQAT…KKPS). A Phosphoserine modification is found at serine 1794. Residues 1873-1890 (DEQKKKKPNPGKDKKTSE) are compositionally biased toward basic and acidic residues. Residues 1931–1971 (CEICHEIFKSKNMRVLKCGHKFHKGCFKQWLKGQSTCPTCG) form an RING-type; atypical zinc finger.

As to quaternary structure, interacts (when phosphorylated on Ser-378) with AKT1, AKT2 and AKT3 (when phosphorylated). Interacts with CIT. Interacts with POLG. Interacts with HSP70. Interacts with SMURF2. Phosphorylation on Ser-378 by Akt is required for ubiquitin ligase activity. In terms of processing, proteolytically cleaved into differently sized N- and C-terminal fragments.

The protein resides in the nucleus. Its subcellular location is the cytoplasm. The protein localises to the golgi apparatus. It catalyses the reaction S-ubiquitinyl-[E2 ubiquitin-conjugating enzyme]-L-cysteine + [acceptor protein]-L-lysine = [E2 ubiquitin-conjugating enzyme]-L-cysteine + N(6)-ubiquitinyl-[acceptor protein]-L-lysine.. It functions in the pathway protein modification; protein ubiquitination. Functionally, E3 ubiquitin-protein ligase which catalyzes the formation of 'Lys-48'-polyubiquitin chains. Mediates the ubiquitination and subsequent degradation of phosphorylated Akt (AKT1, AKT2 and AKT3) in the nucleus. Acts as a terminal regulator of Akt signaling after activation; its phosphorylation by Akt, which is a prerequisite for ubiquitin ligase activity, suggests the existence of a regulation mechanism required to control Akt levels after activation. Positively regulates TGFB1-induced epithelial-mesenchymal transition and myofibroblast differentiation by mediating the ubiquitination and subsequent degradation of SMURF2. Regulates neuronal differentiation by regulating actin remodeling and Golgi organization via a signaling cascade involving RHOA, CIT and ROCK. Inhibits cell proliferation. This Mus musculus (Mouse) protein is E3 ubiquitin-protein ligase TTC3 (Ttc3).